A 309-amino-acid polypeptide reads, in one-letter code: ASC1-like protein 1 (309 aa).

The next 6 membrane-spanning stretches (helical) occupy residues 27 to 47, 84 to 104, 130 to 150, 156 to 176, 215 to 235, and 260 to 280; these read FFAL…LDCF, CVYF…EPWF, AVYM…MFWE, FGVS…SYVF, FLLF…FWIL, and YVFN…WVLI. Residues 75–289 form the TLC domain; that stretch reads RKFKESAWKC…IYRMLVRQIK (215 aa).

It localises to the endoplasmic reticulum membrane. Its function is as follows. Mediates resistance to sphinganine-analog mycotoxins (SAMs) by restoring the sphingolipid biosynthesis. Could salvage the transport of GPI-anchored proteins from the endoplasmic reticulum to the Golgi apparatus in ceramides-depleted cells after SAM exposure. In Oryza sativa subsp. japonica (Rice), this protein is ASC1-like protein 1.